The primary structure comprises 177 residues: Adenine phosphoribosyltransferase (177 aa).

It belongs to the purine/pyrimidine phosphoribosyltransferase family. Homodimer.

It is found in the cytoplasm. It catalyses the reaction AMP + diphosphate = 5-phospho-alpha-D-ribose 1-diphosphate + adenine. Its pathway is purine metabolism; AMP biosynthesis via salvage pathway; AMP from adenine: step 1/1. Its function is as follows. Catalyzes a salvage reaction resulting in the formation of AMP, that is energically less costly than de novo synthesis. This chain is Adenine phosphoribosyltransferase, found in Mycobacteroides abscessus (strain ATCC 19977 / DSM 44196 / CCUG 20993 / CIP 104536 / JCM 13569 / NCTC 13031 / TMC 1543 / L948) (Mycobacterium abscessus).